A 78-amino-acid polypeptide reads, in one-letter code: Conotoxin Cal6.3a (78 aa).

A signal peptide spans 1–21 (MRFLHFLIVAVLLASFMESGA). The propeptide occupies 22-26 (MPRNP). 3 cysteine pairs are disulfide-bonded: Cys-38–Cys-49, Cys-41–Cys-53, and Cys-48–Cys-56. The residue at position 76 (Gln-76) is a Glutamine amide.

Expressed by the venom duct.

The protein resides in the secreted. Its function is as follows. Probable neurotoxin with unknown target. Possibly targets ion channels. This is Conotoxin Cal6.3a from Californiconus californicus (California cone).